The following is a 133-amino-acid chain: ATP synthase epsilon chain, chloroplastic (133 aa).

This sequence belongs to the ATPase epsilon chain family. In terms of assembly, F-type ATPases have 2 components, CF(1) - the catalytic core - and CF(0) - the membrane proton channel. CF(1) has five subunits: alpha(3), beta(3), gamma(1), delta(1), epsilon(1). CF(0) has three main subunits: a, b and c.

It localises to the plastid. Its subcellular location is the chloroplast thylakoid membrane. In terms of biological role, produces ATP from ADP in the presence of a proton gradient across the membrane. The chain is ATP synthase epsilon chain, chloroplastic from Nicotiana sylvestris (Wood tobacco).